The primary structure comprises 336 residues: Cytoskeleton protein RodZ (336 aa).

The Cytoplasmic portion of the chain corresponds to 1–111; that stretch reads MNTEATHDQN…LGKRRKKRDG (111 aa). The region spanning 19-71 is the HTH cro/C1-type domain; it reads LRNAREQLGLSQQAVAERLCLKVSTVRDIEEDKAPADLASTFLRGYIRSYARL. The segment at residues 30 to 49 is a DNA-binding region (H-T-H motif); it reads QQAVAERLCLKVSTVRDIEE. Residues 112 to 132 traverse the membrane as a helical; Signal-anchor for type II membrane protein segment; that stretch reads WLMTFTWLVLFVVIGLSGAWW. Residues 133 to 336 are Periplasmic-facing; the sequence is WQDHKAQQEE…TLNAEQSPAQ (204 aa). Residues 148–164 are compositionally biased toward polar residues; the sequence is DQSSAELNNNQSQSVPL. The segment at 148 to 248 is disordered; the sequence is DQSSAELNNN…TDQAGVTTPA (101 aa). Residues 165-201 show a composition bias toward low complexity; the sequence is DTSTTTDQAMATTPTSPVDTTATNTQTPAATTAPSPT. Residues 202–217 show a composition bias toward polar residues; that stretch reads VDSQQNAVVPPSQANV. The segment covering 219–236 has biased composition (low complexity); sequence TAATPAPAATTMPDGAAP.

Belongs to the RodZ family.

It is found in the cell inner membrane. In terms of biological role, cytoskeletal protein that is involved in cell-shape control through regulation of the length of the long axis. In Escherichia coli (strain SMS-3-5 / SECEC), this protein is Cytoskeleton protein RodZ.